Here is a 382-residue protein sequence, read N- to C-terminus: V-type proton ATPase subunit C 1 (382 aa).

Thr2 carries the N-acetylthreonine modification.

It belongs to the V-ATPase C subunit family. As to quaternary structure, V-ATPase is a heteromultimeric enzyme made up of two complexes: the ATP-hydrolytic V1 complex and the proton translocation V0 complex. The V1 complex consists of three catalytic AB heterodimers that form a heterohexamer, three peripheral stalks each consisting of EG heterodimers, one central rotor including subunits D and F, and the regulatory subunits C and H. The proton translocation complex V0 consists of the proton transport subunit a, a ring of proteolipid subunits c9c'', rotary subunit d, subunits e and f, and the accessory subunits ATP6AP1/Ac45 and ATP6AP2/PRR.

The protein resides in the cytoplasmic vesicle. Its subcellular location is the secretory vesicle. It localises to the synaptic vesicle membrane. It is found in the clathrin-coated vesicle membrane. Its function is as follows. Subunit of the V1 complex of vacuolar(H+)-ATPase (V-ATPase), a multisubunit enzyme composed of a peripheral complex (V1) that hydrolyzes ATP and a membrane integral complex (V0) that translocates protons. V-ATPase is responsible for acidifying and maintaining the pH of intracellular compartments and in some cell types, is targeted to the plasma membrane, where it is responsible for acidifying the extracellular environment. Subunit C is necessary for the assembly of the catalytic sector of the enzyme and is likely to have a specific function in its catalytic activity. The chain is V-type proton ATPase subunit C 1 (ATP6V1C1) from Macaca fascicularis (Crab-eating macaque).